Here is a 526-residue protein sequence, read N- to C-terminus: Peptide chain release factor 3 (526 aa).

One can recognise a tr-type G domain in the interval 8–277 (NKRRTFAIIS…GLTQWAPAPQ (270 aa)). Residues 17–24 (SHPDAGKT), 85–89 (DTPGH), and 139–142 (NKLD) contribute to the GTP site.

Belongs to the TRAFAC class translation factor GTPase superfamily. Classic translation factor GTPase family. PrfC subfamily.

It is found in the cytoplasm. Its function is as follows. Increases the formation of ribosomal termination complexes and stimulates activities of RF-1 and RF-2. It binds guanine nucleotides and has strong preference for UGA stop codons. It may interact directly with the ribosome. The stimulation of RF-1 and RF-2 is significantly reduced by GTP and GDP, but not by GMP. The sequence is that of Peptide chain release factor 3 from Histophilus somni (strain 129Pt) (Haemophilus somnus).